Reading from the N-terminus, the 72-residue chain is Lantibiotic lichenicidin VK21 A2 (72 aa).

Residues 1–21 form a disordered region; the sequence is MKTMKNSAAREAFKGANHPAG. A propeptide spanning residues 1 to 40 is cleaved from the precursor; it reads MKTMKNSAAREAFKGANHPAGMVSEEELKALVGGNDVNPE. Residue threonine 41 is modified to 2-oxobutanoic acid. 3 positions are modified to (Z)-2,3-didehydrobutyrine: threonine 42, threonine 45, and threonine 46. A cross-link (lanthionine (Ser-Cys)) is located at residues 47 to 51; sequence SSWTC. Serine 48 is subject to 2,3-didehydroalanine (Ser). 2 positions are modified to (Z)-2,3-didehydrobutyrine: threonine 53 and threonine 57. The lanthionine (Ser-Cys) cross-link spans 59–63; sequence SASLC. Cross-links (beta-methyllanthionine (Thr-Cys)) lie at residues 65 to 68 and 69 to 72; these read TTKC and TSRC. Threonine 66 carries the (Z)-2,3-didehydrobutyrine modification.

Post-translationally, maturation of lantibiotics involves the enzymatic conversion of Thr, and Ser into dehydrated AA and the formation of thioether bonds with cysteine. This is followed by membrane translocation and cleavage of the modified precursor. The 2,3-didehydrobutyrines are determined to be the Z-isomers.

The protein localises to the secreted. Functionally, lanthionine-containing peptide antibiotic (lantibiotic) active on Gram-positive bacteria. The bactericidal activity of lantibiotics is based on depolarization of energized bacterial cytoplasmic membranes, initiated by the formation of aqueous transmembrane pores. When present individually, LchA2 exhibits activity towards B.subtilis L1 (IC(50)=30 uM), Rhodococcus sp. SS2 (IC(50)=16.6 uM), M.luteus B1314 (IC(50)=2.6 uM), B.megaterium VKM41 (IC(50)=2 uM), S.aureus 209p (IC(50)=20 uM), B.pumilus 2001, B.globigii I, B.amyloliquefaciens I, M.smegmatis 1171 and M.phlei 1291. However, when combined with LchA1, it displays much stronger activity against B.subtilis L1 (IC(50)=0.64 uM), Rhodococcus sp. SS2 (IC(50)=0.64 uM), M.luteus B1314 (IC(50)=0.09 uM), B.megaterium VKM41 (IC(50)=0.12 uM) and S.aureus 209p (IC(50)=0.64 uM). The activity of the combined LchA1 and LchA2 peptides is strongest at a molar ratio of 1. Even when applied at 17-fold concentration of the highest IC(50) values for Gram-positive bacteria, neither the individual nor the combined peptides display activity against Gram-negative bacteria P.aeruginosa PAO1, P.putida I-97 or E.coli C600. In Bacillus licheniformis, this protein is Lantibiotic lichenicidin VK21 A2.